Reading from the N-terminus, the 694-residue chain is MAAVRSLRVSVKSDSASDRSESDSESDSDRDAREAEPMEVEEGEVELESIPVRRSLKELLPDTSRRYENKAGTFITGIDVTSKEAIEKKEKRARRFHFRAEENLTQKDVVLERDLLKKMIPKVRLEALHMSGVDDMSTQDVFGYFKEYPPAHIEWIDDASCNVVWLDDITSTRALINLSRMPDKEEVTNTDSSKPSELPVQTQKARRSRGSDDDDDDDEEEEGEVDDDDDDDEEDEKARDIEDETEKKPQETRETSLSQAERDSLLQNEPRPTVKPFKGNKLFLRFATHDDKKELGAARRSRYYMKYGNPNYGGMKGILSNSWKRRYHTRRIQRDILKTKKPLIGDSMGHTPPYTHRHSADLVNLPEEPIEEEEEEEEDGEEDMDADDRVVEYKDRGEKERGPRLVEGGLRSRLGGPSPTSSDSDEMDYDLELKMISTPSPKKSMKMTMYADEVETNLRSLRNSIRTESSGSVKSRIGGGGGGGSGGAVEGRGEGGSSKSTSEKVTDVRQLLEEKRQGLSQQRSRPPVATSGKTDVRQRLGKRPHSPERRRSVSPVISRKTASRREPLSDVRSRLGVAKHDNRSLFSEPPKDKKTGGLWSRLGPSHKDSGSGDEDKPSSRASSSRGIRRRKDEDSDGVEDEDEEDDSHLQKMWGAMIKQKEQQSNKMKKSRLDNLPSLQIEISRDGSNGSDSDS.

The tract at residues 1-47 (MAAVRSLRVSVKSDSASDRSESDSESDSDRDAREAEPMEVEEGEVEL) is disordered. The span at 15–36 (SASDRSESDSESDSDRDAREAE) shows a compositional bias: basic and acidic residues. The span at 37–47 (PMEVEEGEVEL) shows a compositional bias: acidic residues. Residues 126–187 (EALHMSGVDD…LSRMPDKEEV (62 aa)) are RNA recognition motif (RRM) domain. A WLDD motif; essential for 7-methylguanosine-containing mRNA cap binding motif is present at residues 155 to 158 (WIDD). 3 disordered regions span residues 183 to 277 (DKEE…VKPF), 336 to 430 (ILKT…MDYD), and 461 to 694 (LRNS…DSDS). Residues 189 to 203 (NTDSSKPSELPVQTQ) show a composition bias toward polar residues. Residues 212–235 (DDDDDDDEEEEGEVDDDDDDDEED) show a composition bias toward acidic residues. Basic and acidic residues predominate over residues 236–264 (EKARDIEDETEKKPQETRETSLSQAERDS). Residues 368–386 (EPIEEEEEEEEDGEEDMDA) show a composition bias toward acidic residues. The span at 387-404 (DDRVVEYKDRGEKERGPR) shows a compositional bias: basic and acidic residues. The span at 477-496 (IGGGGGGGSGGAVEGRGEGG) shows a compositional bias: gly residues. Composition is skewed to basic and acidic residues over residues 501–517 (TSEK…EKRQ), 563–595 (SRRE…DKKT), and 605–618 (SHKD…DKPS). Over residues 634-646 (DSDGVEDEDEEDD) the composition is skewed to acidic residues. A compositionally biased stretch (low complexity) spans 685–694 (DGSNGSDSDS).

The protein belongs to the NCBP3 family. As to quaternary structure, component of an alternative cap-binding complex (CBC) composed of NCBP1/CBP80 and NCBP3.

It localises to the nucleus. Its subcellular location is the cytoplasm. Associates with NCBP1/CBP80 to form an alternative cap-binding complex (CBC) which plays a key role in mRNA export. NCBP3 serves as adapter protein linking the capped RNAs (m7GpppG-capped RNA) to NCBP1/CBP80. Unlike the conventional CBC with NCBP2 which binds both small nuclear RNA (snRNA) and messenger (mRNA) and is involved in their export from the nucleus, the alternative CBC with NCBP3 does not bind snRNA and associates only with mRNA thereby playing a role in only mRNA export. The sequence is that of Nuclear cap-binding protein subunit 3 from Danio rerio (Zebrafish).